Here is a 301-residue protein sequence, read N- to C-terminus: MDGLRGDSSGGGGGGGTPGQCRNFLSSPVFGAAHTGRAAAAAAAAASGFAYAGGGERSGAAARPDPPAKDCPGSGAPPAAPALGYGYHFGNGYYSCRMSNGVGIQQNALKSPPHASIGGFPVEKYMDVSSLTSTSVPANEVSTRAKEVSSYQGYTNPYQHVPGYIDMVSTFGSGEPRHETYISMEGYQSWTLANGWNGQVYCAKDQTQSSHFWKSSFPGDVALNQPEMCVYRRGRKKRVPYTKLQLKELENEYAINKFINKDKRRRISAATNLSERQVTIWFQNRRVKDKKIVSKLKDNVS.

Disordered stretches follow at residues 1–20 (MDGL…TPGQ) and 55–75 (GERS…PGSG). Over residues 8–18 (SSGGGGGGGTP) the composition is skewed to gly residues. A DNA-binding region (homeobox) is located at residues 234-293 (GRKKRVPYTKLQLKELENEYAINKFINKDKRRRISAATNLSERQVTIWFQNRRVKDKKIV).

The protein belongs to the Abd-B homeobox family.

It localises to the nucleus. Its function is as follows. Sequence-specific transcription factor that binds gene promoters and activates their transcription. Part of a developmental regulatory system that provides cells with specific positional identities on the anterior-posterior axis. This Gallus gallus (Chicken) protein is Homeobox protein Hox-D13 (HOXD13).